Consider the following 130-residue polypeptide: T-cell receptor beta chain V region A20.2.25 (130 aa).

A signal peptide spans 1–21 (MSCRLLLYVSLCLVETALMNT). The interval 22–112 (KITQSPRYLI…DSAVYFCASS (91 aa)) is v segment. N-linked (GlcNAc...) asparagine glycosylation is found at Asn-36 and Asn-75. Positions 113–115 (HGE) are d segment. The interval 116 to 130 (NTEVFFGKGTTLTVV) is j segment.

The sequence is that of T-cell receptor beta chain V region A20.2.25 from Mus musculus (Mouse).